Here is a 149-residue protein sequence, read N- to C-terminus: Protein TraJ (149 aa).

It is found in the cell membrane. Its function is as follows. This protein is essential for positively regulating the expression of transfer genes that are involved in the conjugal transfer of DNA between bacterial cells. The chain is Protein TraJ (traJ) from Escherichia coli.